The primary structure comprises 315 residues: GTP cyclohydrolase MptA 1 (315 aa).

The protein belongs to the GTP cyclohydrolase IV family. As to quaternary structure, homodimer. Requires Fe(2+) as cofactor.

It catalyses the reaction GTP + H2O = 7,8-dihydroneopterin 2',3'-cyclic phosphate + formate + diphosphate + H(+). It participates in cofactor biosynthesis; 5,6,7,8-tetrahydromethanopterin biosynthesis. Converts GTP to 7,8-dihydro-D-neopterin 2',3'-cyclic phosphate, the first intermediate in the biosynthesis of coenzyme methanopterin. This is GTP cyclohydrolase MptA 1 from Methanocella arvoryzae (strain DSM 22066 / NBRC 105507 / MRE50).